The chain runs to 460 residues: Ribosomal protein uS12 methylthiotransferase RimO (460 aa).

Residues 16-130 form the MTTase N-terminal domain; sequence NKIHFISLGC…ILSAIESKEA (115 aa). [4Fe-4S] cluster-binding residues include C25, C61, C93, C164, C168, and C171. Residues 150 to 382 form the Radical SAM core domain; sequence STPKHYAYLK…SQTQKKNVEK (233 aa). Residues 385 to 455 enclose the TRAM domain; it reads KQLVGQIVEA…GYDLVGRVIK (71 aa).

Belongs to the methylthiotransferase family. RimO subfamily. Requires [4Fe-4S] cluster as cofactor.

Its subcellular location is the cytoplasm. It catalyses the reaction L-aspartate(89)-[ribosomal protein uS12]-hydrogen + (sulfur carrier)-SH + AH2 + 2 S-adenosyl-L-methionine = 3-methylsulfanyl-L-aspartate(89)-[ribosomal protein uS12]-hydrogen + (sulfur carrier)-H + 5'-deoxyadenosine + L-methionine + A + S-adenosyl-L-homocysteine + 2 H(+). Its function is as follows. Catalyzes the methylthiolation of an aspartic acid residue of ribosomal protein uS12. The sequence is that of Ribosomal protein uS12 methylthiotransferase RimO from Chlamydia caviae (strain ATCC VR-813 / DSM 19441 / 03DC25 / GPIC) (Chlamydophila caviae).